Reading from the N-terminus, the 113-residue chain is Large ribosomal subunit protein eL34 (113 aa).

This sequence belongs to the eukaryotic ribosomal protein eL34 family.

The sequence is that of Large ribosomal subunit protein eL34 from Methanopyrus kandleri (strain AV19 / DSM 6324 / JCM 9639 / NBRC 100938).